The primary structure comprises 77 residues: Conotoxin CaHr91 (77 aa).

An N-terminal signal peptide occupies residues 1-19 (MKLTCALIITVLFLSITAD). Residues 20–43 (DSRGKQGYRALKSIAGMLNSKTVR) constitute a propeptide that is removed on maturation. Disulfide bonds link Cys-45–Cys-60, Cys-52–Cys-65, and Cys-59–Cys-74.

The protein belongs to the conotoxin O1 superfamily. In terms of tissue distribution, expressed by the venom duct.

It is found in the secreted. This is Conotoxin CaHr91 from Conus capitaneus (Captain cone).